Consider the following 523-residue polypeptide: Peptide chain release factor 3 (523 aa).

A tr-type G domain is found at 10–277; sequence EKRRTFAIIS…SFVDLAPAPE (268 aa). Residues 19 to 26, 87 to 91, and 141 to 144 each bind GTP; these read SHPDAGKT, DTPGH, and NKLD.

Belongs to the TRAFAC class translation factor GTPase superfamily. Classic translation factor GTPase family. PrfC subfamily.

It localises to the cytoplasm. Its function is as follows. Increases the formation of ribosomal termination complexes and stimulates activities of RF-1 and RF-2. It binds guanine nucleotides and has strong preference for UGA stop codons. It may interact directly with the ribosome. The stimulation of RF-1 and RF-2 is significantly reduced by GTP and GDP, but not by GMP. This Lactobacillus acidophilus (strain ATCC 700396 / NCK56 / N2 / NCFM) protein is Peptide chain release factor 3.